The sequence spans 175 residues: Ribulose bisphosphate carboxylase small subunit, chloroplastic (175 aa).

Residues 1-46 constitute a chloroplast transit peptide; the sequence is MAPSVMASSATTVAPFQGLKSTAGMPVARRSGNSSFGNVSNGGRIR. Residues 60–64 are interaction with large subunit; the sequence is ETLSY.

Belongs to the RuBisCO small chain family. In terms of assembly, heterohexadecamer of 8 large and 8 small subunits.

The protein localises to the plastid. It is found in the chloroplast. RuBisCO catalyzes two reactions: the carboxylation of D-ribulose 1,5-bisphosphate, the primary event in carbon dioxide fixation, as well as the oxidative fragmentation of the pentose substrate. Both reactions occur simultaneously and in competition at the same active site. Although the small subunit is not catalytic it is essential for maximal activity. The sequence is that of Ribulose bisphosphate carboxylase small subunit, chloroplastic from Oryza sativa subsp. indica (Rice).